Here is a 127-residue protein sequence, read N- to C-terminus: Membrane-bound lysozyme inhibitor of C-type lysozyme (127 aa).

Residues 1-18 form the signal peptide; that stretch reads MKKALWLLLAAVPVVLVA. Cys19 carries the N-palmitoyl cysteine lipid modification. Residue Cys19 is the site of S-diacylglycerol cysteine attachment. A disulfide bridge links Cys51 with Cys124.

It belongs to the MliC family. Type 2 subfamily. Homodimer.

The protein localises to the cell outer membrane. Functionally, specifically inhibits C-type lysozymes. This Pseudomonas aeruginosa (strain ATCC 15692 / DSM 22644 / CIP 104116 / JCM 14847 / LMG 12228 / 1C / PRS 101 / PAO1) protein is Membrane-bound lysozyme inhibitor of C-type lysozyme.